A 446-amino-acid chain; its full sequence is Histidine--tRNA ligase (446 aa).

The protein belongs to the class-II aminoacyl-tRNA synthetase family. As to quaternary structure, homodimer.

The protein resides in the cytoplasm. It carries out the reaction tRNA(His) + L-histidine + ATP = L-histidyl-tRNA(His) + AMP + diphosphate + H(+). The sequence is that of Histidine--tRNA ligase from Burkholderia pseudomallei (strain 1710b).